Here is a 414-residue protein sequence, read N- to C-terminus: Tryptophan synthase beta chain (414 aa).

A disordered region spans residues 1 to 28 (MVSTISRQDQNNNDDLNQPSKEGRFGKY). A compositionally biased stretch (low complexity) spans 8-18 (QDQNNNDDLNQ). Residue K108 is modified to N6-(pyridoxal phosphate)lysine.

The protein belongs to the TrpB family. Tetramer of two alpha and two beta chains. It depends on pyridoxal 5'-phosphate as a cofactor.

It carries out the reaction (1S,2R)-1-C-(indol-3-yl)glycerol 3-phosphate + L-serine = D-glyceraldehyde 3-phosphate + L-tryptophan + H2O. Its pathway is amino-acid biosynthesis; L-tryptophan biosynthesis; L-tryptophan from chorismate: step 5/5. In terms of biological role, the beta subunit is responsible for the synthesis of L-tryptophan from indole and L-serine. The protein is Tryptophan synthase beta chain of Prochlorococcus marinus subsp. pastoris (strain CCMP1986 / NIES-2087 / MED4).